Here is a 61-residue protein sequence, read N- to C-terminus: NPCCDAATCKMRPGSQCAEGLCCDQCRFMKKGTVCRVSMVDRNDDTCTGLSADCPRNGLYG.

A Disintegrin domain is found at 1-61 (NPCCDAATCK…ADCPRNGLYG (61 aa)). Cystine bridges form between C3–C26, C17–C23, C22–C47, and C35–C54. The Cell attachment site; atypical (MVD) motif lies at 39–41 (MVD).

It belongs to the venom metalloproteinase (M12B) family. P-II subfamily. P-IIa sub-subfamily. In terms of assembly, monomer. In terms of tissue distribution, expressed by the venom gland.

It localises to the secreted. Recombinant disintegrin rubistatin inhibits ADP-induced platelet aggregation. In addition, it strongly induces apoptosis, and inhibits cell migration and proliferation of the human cancer cell line SK-Mel-28. This chain is Disintegrin rubistatin, found in Crotalus ruber ruber (Red diamond rattlesnake).